The sequence spans 1017 residues: Putative calcium-transporting ATPase 13, plasma membrane-type (1017 aa).

Met1 carries the post-translational modification N-acetylmethionine. At 1–147 (MRRNVSDHAE…NTYTRQPSKG (147 aa)) the chain is on the cytoplasmic side. Residues 20–31 (LLELPKTLSKSN) form an interaction with calmodulin region. A helical transmembrane segment spans residues 148–168 (LFHFVVEAFKDLTILILLGCA). Residues 169–186 (TLSLGFGIKEHGLKEGWY) lie on the Lumenal side of the membrane. Residues 187-207 (DGGSIFVAVFLVVAVSAVSNF) form a helical membrane-spanning segment. Over 208-336 (RQNRQFDKLS…NEQTPLQSRL (129 aa)) the chain is Cytoplasmic. The helical transmembrane segment at 337–356 (DKLTSSIGKVGLLVAFLVLL) threads the bilayer. Residues 357 to 393 (VLLIRYFTGTTKDESGNREYNGKTTKSDEIVNAVVKM) are Lumenal-facing. Residues 394 to 411 (VAAAVTIIVVAIPEGLPL) form a helical membrane-spanning segment. The Cytoplasmic portion of the chain corresponds to 412–802 (AVTLTLAYSM…KWGRCVYNNI (391 aa)). Asp449 acts as the 4-aspartylphosphate intermediate in catalysis. Residues Asp747 and Asp751 each contribute to the Mg(2+) site. The helical transmembrane segment at 803–821 (QKFIQFQLTVNVAALVINF) threads the bilayer. The Lumenal segment spans residues 822-832 (VAAVSAGDVPL). Residues 833 to 853 (TAVQLLWVNLIMDTLGALALA) form a helical membrane-spanning segment. Over 854-873 (TEKPTNDLMKKKPIGRVAPL) the chain is Cytoplasmic. A helical transmembrane segment spans residues 874-896 (ITNIMWRNLLAQAFYQISVLLVL). Residues 897–905 (QFRGRSIFN) are Lumenal-facing. The helical transmembrane segment at 906-926 (VTEKVKNTLIFNTFVLCQVFN) threads the bilayer. The Cytoplasmic portion of the chain corresponds to 927 to 944 (EFNARSLEKKNVFKGLHK). Residues 945–966 (NRLFIGIIVVTVVLQVVMVEFL) form a helical membrane-spanning segment. Residues 967–976 (KRFADTERLN) are Lumenal-facing. Residues 977–998 (LGQWGVCIAIAAASWPIGWLVK) form a helical membrane-spanning segment. Residues 999–1002 (SVPV) are Cytoplasmic-facing.

This sequence belongs to the cation transport ATPase (P-type) (TC 3.A.3) family. Type IIB subfamily.

The protein localises to the membrane. It catalyses the reaction Ca(2+)(in) + ATP + H2O = Ca(2+)(out) + ADP + phosphate + H(+). With respect to regulation, activated by calmodulin. Its function is as follows. This magnesium-dependent enzyme catalyzes the hydrolysis of ATP coupled with the translocation of calcium from the cytosol out of the cell or into organelles. The sequence is that of Putative calcium-transporting ATPase 13, plasma membrane-type (ACA13) from Arabidopsis thaliana (Mouse-ear cress).